Consider the following 277-residue polypeptide: Methylamine utilization protein MauF (277 aa).

Helical transmembrane passes span 33 to 53 (IAVLLAAALAGAAGGVALASA), 59 to 79 (LWAVLGAAAVAGGLLSTWSPC), 111 to 131 (YGLGALMLGGLLGGIGLIAGF), 132 to 152 (SGFGSTALLVLGLVGLAYGAH), 179 to 199 (WVIGGLYGLSLGLDYLTYVQT), 205 to 225 (MTLAAVFTGNIAHAIAIVALF), and 257 to 277 (ALADGAILTALGAGFTVLALI).

The protein resides in the cell membrane. It participates in one-carbon metabolism; methylamine degradation. In Paracoccus denitrificans, this protein is Methylamine utilization protein MauF (mauF).